The chain runs to 112 residues: Putative acyl carrier protein, mitochondrial (112 aa).

The transit peptide at 1–28 (MLSRFSSQLRFISAVRPVIPKFQPLRFY) directs the protein to the mitochondrion. The Carrier domain occupies 33–109 (PDAEKRILKV…DAISYITKNP (77 aa)). The residue at position 69 (serine 69) is an O-(pantetheine 4'-phosphoryl)serine.

This sequence belongs to the acyl carrier protein (ACP) family. Post-translationally, 4'-phosphopantetheine is transferred from CoA to a specific serine of apo-ACP by acpS. This modification is essential for activity because fatty acids are bound in thioester linkage to the sulfhydryl of the prosthetic group.

The protein resides in the mitochondrion. It functions in the pathway lipid metabolism; fatty acid biosynthesis. Carrier of the growing fatty acid chain in fatty acid biosynthesis. May be involved in the synthesis of very-long-chain fatty acids. The chain is Putative acyl carrier protein, mitochondrial from Schizosaccharomyces pombe (strain 972 / ATCC 24843) (Fission yeast).